The primary structure comprises 229 residues: Golgi to ER traffic protein 1 (229 aa).

Residues 1 to 14 (MGILAALDLHPYTL) are Lumenal-facing. The helical transmembrane segment at 15–34 (VVSSFTVLLIQQLVGFIGKS) threads the bilayer. The Cytoplasmic portion of the chain corresponds to 35 to 122 (TIQEFAWLFY…KINSLVGVVL (88 aa)). A coiled-coil region spans residues 60 to 117 (HTKKQEELHKLNREKRSISAQDEYAKWTKLNRQAEKLTAEVKSLSDDIAKDKSKINSL). Residues 123–143 (LFLTTLPLWVFRLWFRKSVLF) traverse the membrane as a helical segment. Residues 144–167 (YLPTGVFPYYVERVLAIPFFASGS) are Lumenal-facing. A helical transmembrane segment spans residues 168-184 (VGLTVWMFAVNNVISSV). The Cytoplasmic portion of the chain corresponds to 185–229 (LFLLTFPFKPSVPIPIRQTKVEEVVPESAESKESSPEVIDIADAN). The span at 210–219 (PESAESKESS) shows a compositional bias: basic and acidic residues. Residues 210–229 (PESAESKESSPEVIDIADAN) are disordered.

This sequence belongs to the WRB/GET1 family. In terms of assembly, component of the Golgi to ER traffic (GET) complex, which is composed of GET1, GET2 and GET3. Within the complex, GET1 and GET2 form a heterotetramer which is stabilized by phosphatidylinositol binding and which binds to the GET3 homodimer.

The protein localises to the endoplasmic reticulum membrane. It is found in the golgi apparatus membrane. Its function is as follows. Required for the post-translational delivery of tail-anchored (TA) proteins to the endoplasmic reticulum. Together with GET2, acts as a membrane receptor for soluble GET3, which recognizes and selectively binds the transmembrane domain of TA proteins in the cytosol. The GET complex cooperates with the HDEL receptor ERD2 to mediate the ATP-dependent retrieval of resident ER proteins that contain a C-terminal H-D-E-L retention signal from the Golgi to the ER. This is Golgi to ER traffic protein 1 from Scheffersomyces stipitis (strain ATCC 58785 / CBS 6054 / NBRC 10063 / NRRL Y-11545) (Yeast).